The following is a 240-amino-acid chain: Peptidyl-tRNA hydrolase (240 aa).

Tyrosine 14 contributes to the tRNA binding site. The active-site Proton acceptor is histidine 19. Residues phenylalanine 64, asparagine 66, and asparagine 112 each contribute to the tRNA site. The disordered stretch occupies residues 196–227; it reads EKPAQKQQPKQQSHIRQARSQQAPAKLPETGP. The segment covering 209–218 has biased composition (polar residues); that stretch reads HIRQARSQQA.

The protein belongs to the PTH family. In terms of assembly, monomer.

It is found in the cytoplasm. It carries out the reaction an N-acyl-L-alpha-aminoacyl-tRNA + H2O = an N-acyl-L-amino acid + a tRNA + H(+). Its function is as follows. Hydrolyzes ribosome-free peptidyl-tRNAs (with 1 or more amino acids incorporated), which drop off the ribosome during protein synthesis, or as a result of ribosome stalling. In terms of biological role, catalyzes the release of premature peptidyl moieties from peptidyl-tRNA molecules trapped in stalled 50S ribosomal subunits, and thus maintains levels of free tRNAs and 50S ribosomes. The protein is Peptidyl-tRNA hydrolase of Mesorhizobium japonicum (strain LMG 29417 / CECT 9101 / MAFF 303099) (Mesorhizobium loti (strain MAFF 303099)).